The primary structure comprises 883 residues: Alanine--tRNA ligase (883 aa).

Positions 562, 566, 664, and 668 each coordinate Zn(2+).

This sequence belongs to the class-II aminoacyl-tRNA synthetase family. As to quaternary structure, homotetramer. It depends on Zn(2+) as a cofactor.

The protein resides in the cytoplasm. It catalyses the reaction tRNA(Ala) + L-alanine + ATP = L-alanyl-tRNA(Ala) + AMP + diphosphate. Its function is as follows. Catalyzes the attachment of alanine to tRNA(Ala) in a two-step reaction: alanine is first activated by ATP to form Ala-AMP and then transferred to the acceptor end of tRNA(Ala). Also edits incorrectly charged Ser-tRNA(Ala) and Gly-tRNA(Ala) via its editing domain. This Buchnera aphidicola subsp. Schizaphis graminum (strain Sg) protein is Alanine--tRNA ligase.